Consider the following 143-residue polypeptide: Oxoglutarate dehydrogenase inhibitor (143 aa).

T14 is subject to Phosphothreonine. The FHA domain occupies 68–117 (TTAGRHPESDIFLDDVTVSRRHAEFRINEGEFEVVDVGSLNGTYVNREPR).

The protein resides in the cytoplasm. Functionally, an essential component of the PknG signaling pathway. When unphosphorylated, it inhibits the activity of 2-oxoglutarate dehydrogenase. When phosphorylated it does not inhibit 2-oxoglutarate dehydrogenase. The polypeptide is Oxoglutarate dehydrogenase inhibitor (odhI) (Corynebacterium glutamicum (strain ATCC 13032 / DSM 20300 / JCM 1318 / BCRC 11384 / CCUG 27702 / LMG 3730 / NBRC 12168 / NCIMB 10025 / NRRL B-2784 / 534)).